A 215-amino-acid chain; its full sequence is Phosphatidylserine decarboxylase proenzyme (215 aa).

Ser-183 (schiff-base intermediate with substrate; via pyruvic acid) is an active-site residue. Ser-183 carries the pyruvic acid (Ser); by autocatalysis modification.

The protein belongs to the phosphatidylserine decarboxylase family. PSD-A subfamily. In terms of assembly, heterodimer of a large membrane-associated beta subunit and a small pyruvoyl-containing alpha subunit. Requires pyruvate as cofactor. Is synthesized initially as an inactive proenzyme. Formation of the active enzyme involves a self-maturation process in which the active site pyruvoyl group is generated from an internal serine residue via an autocatalytic post-translational modification. Two non-identical subunits are generated from the proenzyme in this reaction, and the pyruvate is formed at the N-terminus of the alpha chain, which is derived from the carboxyl end of the proenzyme. The post-translation cleavage follows an unusual pathway, termed non-hydrolytic serinolysis, in which the side chain hydroxyl group of the serine supplies its oxygen atom to form the C-terminus of the beta chain, while the remainder of the serine residue undergoes an oxidative deamination to produce ammonia and the pyruvoyl prosthetic group on the alpha chain.

It localises to the cell membrane. The enzyme catalyses a 1,2-diacyl-sn-glycero-3-phospho-L-serine + H(+) = a 1,2-diacyl-sn-glycero-3-phosphoethanolamine + CO2. The protein operates within phospholipid metabolism; phosphatidylethanolamine biosynthesis; phosphatidylethanolamine from CDP-diacylglycerol: step 2/2. In terms of biological role, catalyzes the formation of phosphatidylethanolamine (PtdEtn) from phosphatidylserine (PtdSer). The polypeptide is Phosphatidylserine decarboxylase proenzyme (Symbiobacterium thermophilum (strain DSM 24528 / JCM 14929 / IAM 14863 / T)).